The sequence spans 143 residues: Hemoglobin subunit alpha-1 (143 aa).

Position 2 is an N-acetylserine (Ser2). Residues 2–143 (SLSSKDKATV…RALALAEKYR (142 aa)) enclose the Globin domain. His60 is an O2 binding site. His89 serves as a coordination point for heme b.

It belongs to the globin family. In terms of assembly, hb 1 is a heterotetramer of two alpha-1 and two beta-1 chains. Hb 3 is a heterotetramer of two alpha-1 and two beta-2 chains. As to expression, red blood cells.

Involved in oxygen transport from gills to the various peripheral tissues. The protein is Hemoglobin subunit alpha-1 (hba1) of Gadus morhua (Atlantic cod).